Consider the following 653-residue polypeptide: Probable syringafactin export ATP-binding/permease protein SyfD (653 aa).

The ABC transporter domain occupies 6-244 (LELNGVTRRF…NEKTTERLPT (239 aa)). ATP is bound at residue 42-49 (GASGSGKS). The next 5 membrane-spanning stretches (helical) occupy residues 252–272 (LMANIGLFQEAFVMAWVALIS), 278–298 (LLTMLGIIIGITSVVSIVAIG), 526–546 (LALLLSLIAVISLAVGGIGVM), 583–603 (MVCLIGGVIGISLSFVIGYVF), and 616–636 (LGSIVTAFICSTLIGIVFGFV).

It belongs to the ABC transporter superfamily. Macrolide exporter (TC 3.A.1.122) family. Probably part of a tripartite efflux system, which is composed of an inner membrane transporter, a periplasmic membrane fusion protein, and an outer membrane component.

It localises to the cell inner membrane. Its function is as follows. Probably involved in the export of syringafactins. The protein is Probable syringafactin export ATP-binding/permease protein SyfD of Pseudomonas syringae pv. syringae (strain B728a).